A 238-amino-acid polypeptide reads, in one-letter code: tRNA (guanine-N(7)-)-methyltransferase (238 aa).

Positions 68, 93, 120, and 143 each coordinate S-adenosyl-L-methionine. Residue Asp143 is part of the active site. Residues Lys147, Asp179, and 216-219 each bind substrate; that span reads TKFE.

This sequence belongs to the class I-like SAM-binding methyltransferase superfamily. TrmB family.

The enzyme catalyses guanosine(46) in tRNA + S-adenosyl-L-methionine = N(7)-methylguanosine(46) in tRNA + S-adenosyl-L-homocysteine. It functions in the pathway tRNA modification; N(7)-methylguanine-tRNA biosynthesis. Catalyzes the formation of N(7)-methylguanine at position 46 (m7G46) in tRNA. The chain is tRNA (guanine-N(7)-)-methyltransferase from Marinobacter nauticus (strain ATCC 700491 / DSM 11845 / VT8) (Marinobacter aquaeolei).